We begin with the raw amino-acid sequence, 1195 residues long: Phosphatidylinositol-3,5-bisphosphate 3-phosphatase MTMR4 (1195 aa).

S8 bears the Phosphoserine mark. The 418-residue stretch at 153–570 (EHIRCRQEAE…RALHLWTAVY (418 aa)) folds into the Myotubularin phosphatase domain. The a 1,2-diacyl-sn-glycero-3-phospho-(1D-myo-inositol-3,5-bisphosphate) site is built by N320, N345, and I346. The a 1,2-diacyl-sn-glycero-3-phospho-(1D-myo-inositol-3-phosphate) site is built by N320, N345, and I346. Catalysis depends on C407, which acts as the Phosphocysteine intermediate. S408, D409, G410, W411, D412, R413, K449, and R453 together coordinate a 1,2-diacyl-sn-glycero-3-phospho-(1D-myo-inositol-3,5-bisphosphate). Residues S408, D409, G410, W411, D412, and R413 each contribute to the a 1,2-diacyl-sn-glycero-3-phospho-(1D-myo-inositol-3-phosphate) site. Position 453 (R453) interacts with a 1,2-diacyl-sn-glycero-3-phospho-(1D-myo-inositol-3-phosphate). S610 and S629 each carry phosphoserine. Disordered stretches follow at residues 645–756 (EPWH…EHCP), 780–800 (ESSQNSPTGTPQQAQPDSMLG), and 827–877 (DPST…LLEN). Over residues 720–729 (PEIKVLEETK) the composition is skewed to basic and acidic residues. Polar residues-rich tracts occupy residues 780–795 (ESSQNSPTGTPQQAQP) and 831–854 (DFLNQDPSGSVASISHQEQLSSVP). A PY-motif; substrate motif for NEDD4 motif is present at residues 1004-1008 (VPPLY). Residues 1023–1055 (HRLRQIEAGYKQEVEQLRRQVRELQMRLDIRHC) are a coiled coil. The segment at 1114 to 1174 (DHMASHCYNC…VCNSCYEHIQ (61 aa)) adopts an FYVE-type zinc-finger fold. The Zn(2+) site is built by C1120, C1123, C1136, C1139, C1144, C1147, C1166, and C1169.

The protein belongs to the protein-tyrosine phosphatase family. Non-receptor class myotubularin subfamily. As to quaternary structure, homooligomeric. Forms MTMR3:MTMR4 heterooligomers; regulates the localization of both proteins. The MTMR3:MTMR4 heterooligomer can also recruit both CEP55 and PLK1; occurs during early mitosis, regulates the phosphorylation of CEP55 by PLK1 and its recruitment to the midbody where it can mediate cell abscission. Interacts with SMAD2 and SMAD3; negatively regulates TGF-beta signaling through SMAD2 and SMAD3 dephosphorylation and retention in endosomes. Interacts with SMAD1; negatively regulates BMP signaling through SMAD1 dephosphorylation and retention in endosomes. Post-translationally, ubiquitinated. Ubiquitination by NEDD4 probably leads to proteasomal degradation. Phosphorylated by CDK1 during mitosis. In terms of tissue distribution, expressed in brain, heart, kidney, spleen, liver, colon, testis, muscle, placenta, thyroid gland, pancreas, ovary, prostate, skin, peripheral blood, and bone marrow.

It is found in the early endosome membrane. Its subcellular location is the recycling endosome membrane. The protein localises to the late endosome membrane. It localises to the cytoplasmic vesicle. The protein resides in the phagosome membrane. The enzyme catalyses a 1,2-diacyl-sn-glycero-3-phospho-(1D-myo-inositol-3-phosphate) + H2O = a 1,2-diacyl-sn-glycero-3-phospho-(1D-myo-inositol) + phosphate. It carries out the reaction a 1,2-diacyl-sn-glycero-3-phospho-(1D-myo-inositol-3,5-bisphosphate) + H2O = a 1,2-diacyl-sn-glycero-3-phospho-(1D-myo-inositol-5-phosphate) + phosphate. It catalyses the reaction 1,2-dioctanoyl-sn-glycero-3-phospho-(1-D-myo-inositol-3-phosphate) + H2O = 1,2-dioctanoyl-sn-glycero-3-phospho-(1D-myo-inositol) + phosphate. The catalysed reaction is 1,2-dioctanoyl-sn-glycero-3-phospho-(1D-myo-inositol-3,5-bisphosphate) + H2O = 1,2-dioctanoyl-sn-glycero-3-phospho-(1D-myo-inositol-5-phosphate) + phosphate. With respect to regulation, the phosphatidylinositol-3-phosphate phosphatase activity is inhibited by vanadate. Lipid phosphatase that specifically dephosphorylates the D-3 position of phosphatidylinositol 3-phosphate and phosphatidylinositol 3,5-bisphosphate, generating phosphatidylinositol and phosphatidylinositol 5-phosphate. Decreases the levels of phosphatidylinositol 3-phosphate, a phospholipid found in cell membranes where it acts as key regulator of both cell signaling and intracellular membrane traffic, in a subset of endosomal membranes to negatively regulate both endocytic recycling and trafficking and/or maturation of endosomes toward lysosomes. Through phosphatidylinositol 3-phosphate turnover in phagosome membranes regulates phagocytosis and phagosome maturation. By decreasing phosphatidylinositol 3-monophosphate (PI3P) levels in immune cells it can also regulate the innate immune response. Beside its lipid phosphatase activity, can also function as a molecular adapter to regulate midbody abscission during mitotic cytokinesis. Can also negatively regulate TGF-beta and BMP signaling through Smad proteins dephosphorylation and retention in endosomes. This is Phosphatidylinositol-3,5-bisphosphate 3-phosphatase MTMR4 from Homo sapiens (Human).